The chain runs to 166 residues: Lipoprotein signal peptidase (166 aa).

Helical transmembrane passes span alanine 9–leucine 29, valine 37–asparagine 57, tryptophan 71–leucine 91, and phenylalanine 100–leucine 120. Residues aspartate 126 and aspartate 144 contribute to the active site. A helical membrane pass occupies residues histidine 136–phenylalanine 156.

It belongs to the peptidase A8 family.

It localises to the cell inner membrane. The enzyme catalyses Release of signal peptides from bacterial membrane prolipoproteins. Hydrolyzes -Xaa-Yaa-Zaa-|-(S,diacylglyceryl)Cys-, in which Xaa is hydrophobic (preferably Leu), and Yaa (Ala or Ser) and Zaa (Gly or Ala) have small, neutral side chains.. It functions in the pathway protein modification; lipoprotein biosynthesis (signal peptide cleavage). In terms of biological role, this protein specifically catalyzes the removal of signal peptides from prolipoproteins. The protein is Lipoprotein signal peptidase of Paraburkholderia phymatum (strain DSM 17167 / CIP 108236 / LMG 21445 / STM815) (Burkholderia phymatum).